We begin with the raw amino-acid sequence, 578 residues long: MSDSSVLSLLRERAGLQPDDAAFTYIDYEQDWAGITETLTWSEVFRRTRIVAHEVRRHCTTGDRAVILAPQGLAYIAAFLGSMQAGAIAVPLSVPQIGSHDERVSAVLADASPSVILTTSAVAEAVAEHIHRPNTNNVGPIIEIDSLDLTGNSPSFRVKDLPSAAYLQYTSGSTRAPAGVMISHRNLQANFQQLMSNYFGDRNGVAPPDTTIVSWLPFYHDMGLVLGIIAPILGGYRSELTSPLAFLQRPARWLHSLANGSPSWSAAPNFAFELAVRKTTDADIEGLDLGNVLGITSGAERVHPNTLSRFCNRFAPYNFREDMIRPSYGLAEATLYVASRNSGDKPEVVYFEPDKLSTGSANRCEPKTGTPLLSYGMPTSPTVRIVDPDTCIECPAGTIGEIWVKGDNVAEGYWNKPDETRHTFGAMLVHPSAGTPDGSWLRTGDLGFLSEDEMFIVGRMKDMLIVYGRNHYPEDIESTVQEITGGRVAAISVPVDHTEKLVTVIELKLLGDSAGEAMDELDVIKNNVTAAISRSHGLNVADLVLVPPGSIPTTTSGKIRRAACVEQYRLQQFTRLDG.

The protein belongs to the ATP-dependent AMP-binding enzyme family.

The sequence is that of Putative fatty-acid--CoA ligase fadD21 (fadD21) from Mycobacterium bovis (strain ATCC BAA-935 / AF2122/97).